Consider the following 240-residue polypeptide: 1-(5-phosphoribosyl)-5-[(5-phosphoribosylamino)methylideneamino] imidazole-4-carboxamide isomerase (240 aa).

Catalysis depends on Asp-8, which acts as the Proton acceptor. Asp-129 functions as the Proton donor in the catalytic mechanism.

Belongs to the HisA/HisF family.

The protein resides in the cytoplasm. The catalysed reaction is 1-(5-phospho-beta-D-ribosyl)-5-[(5-phospho-beta-D-ribosylamino)methylideneamino]imidazole-4-carboxamide = 5-[(5-phospho-1-deoxy-D-ribulos-1-ylimino)methylamino]-1-(5-phospho-beta-D-ribosyl)imidazole-4-carboxamide. It functions in the pathway amino-acid biosynthesis; L-histidine biosynthesis; L-histidine from 5-phospho-alpha-D-ribose 1-diphosphate: step 4/9. The protein is 1-(5-phosphoribosyl)-5-[(5-phosphoribosylamino)methylideneamino] imidazole-4-carboxamide isomerase of Listeria welshimeri serovar 6b (strain ATCC 35897 / DSM 20650 / CCUG 15529 / CIP 8149 / NCTC 11857 / SLCC 5334 / V8).